A 230-amino-acid chain; its full sequence is MKKIIHNDWQDVLQGEFEQAYYAKLHEFLKHEYATQNIHPDMYHIFQAFEWTPFSKVKVVILGQDPYHGQNQAHGLSFSVQPGVQVPPSLQNIYKELQSDLGIAPVQHGYLKKWADQGVLLLNSVLTVRDGQAYSHQGHGWERLTDTAIQALSEREQPVVFILWGKAARDKIKLIDQSRNIIIQSAHPSPLSAYRGFFGSKPFSKTNEALEAMGETPIDWQLPTEVLEEK.

The active-site Proton acceptor is the aspartate 65.

It belongs to the uracil-DNA glycosylase (UDG) superfamily. UNG family.

Its subcellular location is the cytoplasm. The catalysed reaction is Hydrolyzes single-stranded DNA or mismatched double-stranded DNA and polynucleotides, releasing free uracil.. Functionally, excises uracil residues from the DNA which can arise as a result of misincorporation of dUMP residues by DNA polymerase or due to deamination of cytosine. In Pediococcus pentosaceus (strain ATCC 25745 / CCUG 21536 / LMG 10740 / 183-1w), this protein is Uracil-DNA glycosylase.